The primary structure comprises 458 residues: Bifunctional protein GlmU (458 aa).

The segment at 1–230 is pyrophosphorylase; the sequence is MHKRTAVVLA…EREILGINSR (230 aa). UDP-N-acetyl-alpha-D-glucosamine is bound by residues 9-12, K23, Q73, and 78-79; these read LAAG and GT. D103 contacts Mg(2+). UDP-N-acetyl-alpha-D-glucosamine contacts are provided by G140, E155, N170, and N228. Mg(2+) is bound at residue N228. The tract at residues 231–251 is linker; it reads VQLAEAEAVLQDRLRRKWMDA. The interval 252–458 is N-acetyltransferase; the sequence is GVTLIDPPSV…FLGRKHKGSQ (207 aa). UDP-N-acetyl-alpha-D-glucosamine contacts are provided by R333 and K351. Residue H363 is the Proton acceptor of the active site. Residues Y366 and N377 each coordinate UDP-N-acetyl-alpha-D-glucosamine. Acetyl-CoA contacts are provided by residues A380, 386 to 387, S405, A423, and R440; that span reads NY.

It in the N-terminal section; belongs to the N-acetylglucosamine-1-phosphate uridyltransferase family. In the C-terminal section; belongs to the transferase hexapeptide repeat family. Homotrimer. Requires Mg(2+) as cofactor.

It is found in the cytoplasm. It carries out the reaction alpha-D-glucosamine 1-phosphate + acetyl-CoA = N-acetyl-alpha-D-glucosamine 1-phosphate + CoA + H(+). The catalysed reaction is N-acetyl-alpha-D-glucosamine 1-phosphate + UTP + H(+) = UDP-N-acetyl-alpha-D-glucosamine + diphosphate. It functions in the pathway nucleotide-sugar biosynthesis; UDP-N-acetyl-alpha-D-glucosamine biosynthesis; N-acetyl-alpha-D-glucosamine 1-phosphate from alpha-D-glucosamine 6-phosphate (route II): step 2/2. The protein operates within nucleotide-sugar biosynthesis; UDP-N-acetyl-alpha-D-glucosamine biosynthesis; UDP-N-acetyl-alpha-D-glucosamine from N-acetyl-alpha-D-glucosamine 1-phosphate: step 1/1. It participates in bacterial outer membrane biogenesis; LPS lipid A biosynthesis. Functionally, catalyzes the last two sequential reactions in the de novo biosynthetic pathway for UDP-N-acetylglucosamine (UDP-GlcNAc). The C-terminal domain catalyzes the transfer of acetyl group from acetyl coenzyme A to glucosamine-1-phosphate (GlcN-1-P) to produce N-acetylglucosamine-1-phosphate (GlcNAc-1-P), which is converted into UDP-GlcNAc by the transfer of uridine 5-monophosphate (from uridine 5-triphosphate), a reaction catalyzed by the N-terminal domain. The chain is Bifunctional protein GlmU from Heliobacterium modesticaldum (strain ATCC 51547 / Ice1).